Here is a 318-residue protein sequence, read N- to C-terminus: Protein W (318 aa).

2 disordered regions span residues 1–23 (MDQD…GGRE) and 38–318 (SEPT…KKGA). A compositionally biased stretch (basic and acidic residues) spans 7 to 20 (ILKEDSEVEREAPG). Positions 50–59 (LHNTINTPQG) are enriched in polar residues. At serine 68 the chain carries Phosphoserine; by host. Residues 83-101 (RSGEESRVSGRTSKPEAEA) are compositionally biased toward basic and acidic residues. Serine 125 bears the Phosphoserine; by host mark. Residues 150 to 168 (GIEDENREMAAHPDKRGED) show a composition bias toward basic and acidic residues. The span at 191–206 (ASNNGRSMEPGSSHSA) shows a compositional bias: polar residues. Residues serine 192, serine 249, serine 257, and serine 260 each carry the phosphoserine; by host modification.

In Sendai virus (strain Z) (SeV), this protein is Protein W (P/V/C).